The primary structure comprises 118 residues: Small ribosomal subunit protein uS13 (118 aa).

The tract at residues 94–118 is disordered; it reads GLPLRGQRTKTNARTRKGPRKPIKK.

The protein belongs to the universal ribosomal protein uS13 family. In terms of assembly, part of the 30S ribosomal subunit. Forms a loose heterodimer with protein S19. Forms two bridges to the 50S subunit in the 70S ribosome.

Functionally, located at the top of the head of the 30S subunit, it contacts several helices of the 16S rRNA. In the 70S ribosome it contacts the 23S rRNA (bridge B1a) and protein L5 of the 50S subunit (bridge B1b), connecting the 2 subunits; these bridges are implicated in subunit movement. Contacts the tRNAs in the A and P-sites. The protein is Small ribosomal subunit protein uS13 of Cellvibrio japonicus (strain Ueda107) (Pseudomonas fluorescens subsp. cellulosa).